The following is a 155-amino-acid chain: Protein LOL2 (155 aa).

Residue methionine 1 is modified to N-acetylmethionine. The tract at residues methionine 1–leucine 35 is disordered. Putative zinc finger regions lie at residues glutamine 60–valine 90 and glutamine 98–isoleucine 128. The segment at glutamate 130–asparagine 155 is disordered. Residues serine 138–serine 149 show a composition bias toward polar residues.

It is found in the nucleus. Functionally, putative zinc finger that may be involved in programmed cell death and defense response. The sequence is that of Protein LOL2 (LOL2) from Arabidopsis thaliana (Mouse-ear cress).